A 348-amino-acid chain; its full sequence is Uroporphyrinogen decarboxylase (348 aa).

Substrate is bound by residues 28 to 32 (RQAGR), aspartate 78, tyrosine 154, threonine 209, and histidine 325.

Belongs to the uroporphyrinogen decarboxylase family. In terms of assembly, homodimer.

The protein localises to the cytoplasm. It carries out the reaction uroporphyrinogen III + 4 H(+) = coproporphyrinogen III + 4 CO2. Its pathway is porphyrin-containing compound metabolism; protoporphyrin-IX biosynthesis; coproporphyrinogen-III from 5-aminolevulinate: step 4/4. Functionally, catalyzes the decarboxylation of four acetate groups of uroporphyrinogen-III to yield coproporphyrinogen-III. The polypeptide is Uroporphyrinogen decarboxylase (Rhodopseudomonas palustris (strain BisB5)).